The chain runs to 386 residues: Acetylornithine aminotransferase (386 aa).

Pyridoxal 5'-phosphate contacts are provided by residues 94–95 (GT) and Phe-121. Arg-124 contacts N(2)-acetyl-L-ornithine. 206–209 (DEVQ) contributes to the pyridoxal 5'-phosphate binding site. N6-(pyridoxal phosphate)lysine is present on Lys-235. Ser-263 is a N(2)-acetyl-L-ornithine binding site. Thr-264 lines the pyridoxal 5'-phosphate pocket.

Belongs to the class-III pyridoxal-phosphate-dependent aminotransferase family. ArgD subfamily. As to quaternary structure, homodimer. Requires pyridoxal 5'-phosphate as cofactor.

Its subcellular location is the cytoplasm. It catalyses the reaction N(2)-acetyl-L-ornithine + 2-oxoglutarate = N-acetyl-L-glutamate 5-semialdehyde + L-glutamate. It functions in the pathway amino-acid biosynthesis; L-arginine biosynthesis; N(2)-acetyl-L-ornithine from L-glutamate: step 4/4. This chain is Acetylornithine aminotransferase, found in Listeria monocytogenes serotype 4b (strain F2365).